The sequence spans 182 residues: Peptidoglycan-recognition protein SB2 (182 aa).

Residues 1–17 (MKLQLALVLCGLTLALG) form the signal peptide. The 126-residue stretch at 40–165 (PVRLIIIHHT…CQTKATACPG (126 aa)) folds into the N-acetylmuramoyl-L-alanine amidase domain. His47 contributes to the Zn(2+) binding site. Cys54 and Cys60 are disulfide-bonded. An N-linked (GlcNAc...) asparagine glycan is attached at Asn149. His155 and Cys163 together coordinate Zn(2+).

It belongs to the N-acetylmuramoyl-L-alanine amidase 2 family. Requires Zn(2+) as cofactor.

The protein resides in the secreted. The catalysed reaction is Hydrolyzes the link between N-acetylmuramoyl residues and L-amino acid residues in certain cell-wall glycopeptides.. Functionally, N-acetylmuramyl-L-alanine amidase involved in innate immunity by degrading bacterial peptidoglycans (PGN). Probably plays a scavenger role by digesting biologically active PGN into biologically inactive fragments. Has no direct bacteriolytic activity. The chain is Peptidoglycan-recognition protein SB2 (PGRP-SB2) from Drosophila melanogaster (Fruit fly).